A 155-amino-acid chain; its full sequence is UPF0178 protein mlr0875 (155 aa).

This sequence belongs to the UPF0178 family.

This is UPF0178 protein mlr0875 from Mesorhizobium japonicum (strain LMG 29417 / CECT 9101 / MAFF 303099) (Mesorhizobium loti (strain MAFF 303099)).